Consider the following 386-residue polypeptide: Vacuolar protein-sorting-associated protein 36 (386 aa).

The GLUE N-terminal domain occupies 1 to 88 (MDRFVWTSGL…SAKIVVHLHP (88 aa)). One can recognise a GLUE C-terminal domain in the interval 105-138 (YIKLSFKEHGQIEFYRRLSEEMTQRRWETVPVSQ). Residues 160–185 (ERKLEEKRKETDKNISEAFEDLSKLM) are a coiled coil.

The protein belongs to the VPS36 family. In terms of assembly, component of a complex at least composed of ELL, SNF8/EAP30, VPS25/EAP20 and VPS36/EAP45. Component of the endosomal sorting complex required for transport II (ESCRT-II), composed of SNF8, VPS36 and two copies of VPS25. Interacts with VPS25, SNF8, TSG101 and CHMP6. Interacts (via GLUE domain) with ubiquitin. Interacts with RILPL1 (via the C-terminal domain); which recruits ESCRT-II to the endosome membranes. Interacts with ECPAS.

It is found in the cytoplasm. The protein resides in the endosome. Its subcellular location is the late endosome. The protein localises to the membrane. It localises to the nucleus. Its function is as follows. Component of the ESCRT-II complex (endosomal sorting complex required for transport II), which is required for multivesicular body (MVB) formation and sorting of endosomal cargo proteins into MVBs. The MVB pathway mediates delivery of transmembrane proteins into the lumen of the lysosome for degradation. The ESCRT-II complex is probably involved in the recruitment of the ESCRT-III complex. Its ability to bind ubiquitin probably plays a role in endosomal sorting of ubiquitinated cargo proteins by ESCRT complexes. The ESCRT-II complex may also play a role in transcription regulation, possibly via its interaction with ELL. Binds phosphoinosides such as PtdIns(3,4,5)P3. In Rattus norvegicus (Rat), this protein is Vacuolar protein-sorting-associated protein 36 (Vps36).